Reading from the N-terminus, the 78-residue chain is Sec-independent protein translocase protein TatA (78 aa).

Residues 1-21 traverse the membrane as a helical segment; the sequence is MGSLSIWHWIVVVAVILLLFG. Over residues 43–55 the composition is skewed to basic and acidic residues; sequence MKDDEKTAEKPEP. The tract at residues 43–78 is disordered; sequence MKDDEKTAEKPEPVKTINHNADGSGAARSDTGSKVI.

It belongs to the TatA/E family. The Tat system comprises two distinct complexes: a TatABC complex, containing multiple copies of TatA, TatB and TatC subunits, and a separate TatA complex, containing only TatA subunits. Substrates initially bind to the TatABC complex, which probably triggers association of the separate TatA complex to form the active translocon.

It is found in the cell inner membrane. Functionally, part of the twin-arginine translocation (Tat) system that transports large folded proteins containing a characteristic twin-arginine motif in their signal peptide across membranes. TatA could form the protein-conducting channel of the Tat system. This Nitrobacter winogradskyi (strain ATCC 25391 / DSM 10237 / CIP 104748 / NCIMB 11846 / Nb-255) protein is Sec-independent protein translocase protein TatA.